The chain runs to 89 residues: Elongation factor 1-beta (89 aa).

This sequence belongs to the EF-1-beta/EF-1-delta family.

Promotes the exchange of GDP for GTP in EF-1-alpha/GDP, thus allowing the regeneration of EF-1-alpha/GTP that could then be used to form the ternary complex EF-1-alpha/GTP/AAtRNA. This is Elongation factor 1-beta (ef1b) from Methanothermobacter thermautotrophicus (strain ATCC 29096 / DSM 1053 / JCM 10044 / NBRC 100330 / Delta H) (Methanobacterium thermoautotrophicum).